We begin with the raw amino-acid sequence, 295 residues long: Bifunctional protein FolD (295 aa).

NADP(+) contacts are provided by residues 177-179 (GRS) and Ser202.

Belongs to the tetrahydrofolate dehydrogenase/cyclohydrolase family. Homodimer.

It catalyses the reaction (6R)-5,10-methylene-5,6,7,8-tetrahydrofolate + NADP(+) = (6R)-5,10-methenyltetrahydrofolate + NADPH. The enzyme catalyses (6R)-5,10-methenyltetrahydrofolate + H2O = (6R)-10-formyltetrahydrofolate + H(+). Its pathway is one-carbon metabolism; tetrahydrofolate interconversion. Catalyzes the oxidation of 5,10-methylenetetrahydrofolate to 5,10-methenyltetrahydrofolate and then the hydrolysis of 5,10-methenyltetrahydrofolate to 10-formyltetrahydrofolate. The polypeptide is Bifunctional protein FolD (Psychrobacter arcticus (strain DSM 17307 / VKM B-2377 / 273-4)).